A 248-amino-acid polypeptide reads, in one-letter code: MRKKLVAGNWKMHGSLAENAALLAALKPALQGIEAAVCVPFPYLAQVQTALAGSSLAWGAQNVSEHGKGAFTGEVSASMLLDFGCKYVIVGHSERRSLYGESDALVAAKYMAAQAAGLTPILCVGESLAERESGVTEQVVARQLDAVVAAAGIASLARAVVAYEPVWAIGTGKTASPEQAQAVHAFIRGKLADLDAAVAAGLIIQYGGSVKAANAAELMAQPDIDGGLIGGASLLADEFVAICRAAAK.

9 to 11 (NWK) contacts substrate. Catalysis depends on His-92, which acts as the Electrophile. The active-site Proton acceptor is the Glu-164. Substrate is bound by residues Gly-170, Ser-209, and 230–231 (GG).

The protein belongs to the triosephosphate isomerase family. Homodimer.

It is found in the cytoplasm. It catalyses the reaction D-glyceraldehyde 3-phosphate = dihydroxyacetone phosphate. It participates in carbohydrate biosynthesis; gluconeogenesis. Its pathway is carbohydrate degradation; glycolysis; D-glyceraldehyde 3-phosphate from glycerone phosphate: step 1/1. Involved in the gluconeogenesis. Catalyzes stereospecifically the conversion of dihydroxyacetone phosphate (DHAP) to D-glyceraldehyde-3-phosphate (G3P). This Thiobacillus denitrificans (strain ATCC 25259 / T1) protein is Triosephosphate isomerase.